A 145-amino-acid chain; its full sequence is LIM domain only protein 3 (145 aa).

LIM zinc-binding domains follow at residues 11-73 (KGCA…LFGV) and 75-137 (GNCA…GLMK).

This is LIM domain only protein 3 from Danio rerio (Zebrafish).